Reading from the N-terminus, the 72-residue chain is Translation initiation factor IF-1 (72 aa).

The S1-like domain occupies 1-72 (MSKEDSFEME…SKGRITYRAR (72 aa)).

Belongs to the IF-1 family. As to quaternary structure, component of the 30S ribosomal translation pre-initiation complex which assembles on the 30S ribosome in the order IF-2 and IF-3, IF-1 and N-formylmethionyl-tRNA(fMet); mRNA recruitment can occur at any time during PIC assembly.

Its subcellular location is the cytoplasm. Its function is as follows. One of the essential components for the initiation of protein synthesis. Stabilizes the binding of IF-2 and IF-3 on the 30S subunit to which N-formylmethionyl-tRNA(fMet) subsequently binds. Helps modulate mRNA selection, yielding the 30S pre-initiation complex (PIC). Upon addition of the 50S ribosomal subunit IF-1, IF-2 and IF-3 are released leaving the mature 70S translation initiation complex. This Pseudomonas syringae pv. tomato (strain ATCC BAA-871 / DC3000) protein is Translation initiation factor IF-1.